A 302-amino-acid polypeptide reads, in one-letter code: RELT-like protein 2 (302 aa).

Residues 15–35 (LYMLFLLVLVFFLMGLVGFMI) form a helical membrane-spanning segment. Disordered regions lie at residues 47–68 (RTSR…DDVN), 135–164 (CSRS…TTVF), 177–212 (RYGL…GQPR), and 247–302 (VPCT…AGGM). Serine 52 is modified (phosphoserine). Composition is skewed to basic and acidic residues over residues 148–158 (RSKEGKGRPRP) and 177–188 (RYGLHEHRDGSP). Over residues 277-294 (QEANGQPTKLDTSGQQDS) the composition is skewed to polar residues.

This sequence belongs to the RELT family. In terms of assembly, interacts with RELT, RELL1, OXSR1, PLSCR1 and TRAF2.

Its subcellular location is the cell membrane. In terms of biological role, induces activation of MAPK14/p38 cascade, when overexpressed. Induces apoptosis, when overexpressed. This is RELT-like protein 2 (Rell2) from Rattus norvegicus (Rat).